Consider the following 171-residue polypeptide: S-ribosylhomocysteine lyase (171 aa).

3 residues coordinate Fe cation: His-54, His-58, and Cys-128.

It belongs to the LuxS family. As to quaternary structure, homodimer. It depends on Fe cation as a cofactor.

It catalyses the reaction S-(5-deoxy-D-ribos-5-yl)-L-homocysteine = (S)-4,5-dihydroxypentane-2,3-dione + L-homocysteine. Its function is as follows. Involved in the synthesis of autoinducer 2 (AI-2) which is secreted by bacteria and is used to communicate both the cell density and the metabolic potential of the environment. The regulation of gene expression in response to changes in cell density is called quorum sensing. Catalyzes the transformation of S-ribosylhomocysteine (RHC) to homocysteine (HC) and 4,5-dihydroxy-2,3-pentadione (DPD). The sequence is that of S-ribosylhomocysteine lyase from Enterobacter sp. (strain 638).